The following is a 707-amino-acid chain: Polyribonucleotide nucleotidyltransferase (707 aa).

The Mg(2+) site is built by Asp488 and Asp494. Residues 555 to 614 (PRLYVMKINPEKIRDVIGKGGAVIRALTEETGTQINIEEDGTITIASNDSAKADEAKRRI) form the KH domain. The 69-residue stretch at 624-692 (GKVYEGAITK…EKGRVKLSMK (69 aa)) folds into the S1 motif domain.

The protein belongs to the polyribonucleotide nucleotidyltransferase family. It depends on Mg(2+) as a cofactor.

It localises to the cytoplasm. It catalyses the reaction RNA(n+1) + phosphate = RNA(n) + a ribonucleoside 5'-diphosphate. Functionally, involved in mRNA degradation. Catalyzes the phosphorolysis of single-stranded polyribonucleotides processively in the 3'- to 5'-direction. In Polaromonas sp. (strain JS666 / ATCC BAA-500), this protein is Polyribonucleotide nucleotidyltransferase.